Consider the following 318-residue polypeptide: Electron transfer flavoprotein subunit alpha (318 aa).

Residue 257–285 (LYIALGISGAIQHRAGMQTSKTIVAVNKD) coordinates FAD.

This sequence belongs to the ETF alpha-subunit/FixB family. In terms of assembly, heterodimer of an alpha and a beta subunit. FAD is required as a cofactor.

Functionally, the electron transfer flavoprotein serves as a specific electron acceptor for other dehydrogenases. It transfers the electrons to the main respiratory chain via ETF-ubiquinone oxidoreductase (ETF dehydrogenase). This chain is Electron transfer flavoprotein subunit alpha (etfA), found in Mycobacterium tuberculosis (strain CDC 1551 / Oshkosh).